Consider the following 448-residue polypeptide: Glutamyl-tRNA reductase (448 aa).

Residues 49-52 (TCNR), serine 109, 114-116 (ETQ), and glutamine 120 contribute to the substrate site. Cysteine 50 acts as the Nucleophile in catalysis. 189–194 (GAGEMS) provides a ligand contact to NADP(+).

This sequence belongs to the glutamyl-tRNA reductase family. In terms of assembly, homodimer.

It carries out the reaction (S)-4-amino-5-oxopentanoate + tRNA(Glu) + NADP(+) = L-glutamyl-tRNA(Glu) + NADPH + H(+). The protein operates within porphyrin-containing compound metabolism; protoporphyrin-IX biosynthesis; 5-aminolevulinate from L-glutamyl-tRNA(Glu): step 1/2. Its function is as follows. Catalyzes the NADPH-dependent reduction of glutamyl-tRNA(Glu) to glutamate 1-semialdehyde (GSA). In Staphylococcus aureus (strain bovine RF122 / ET3-1), this protein is Glutamyl-tRNA reductase.